The primary structure comprises 1388 residues: Endoribonuclease Dicer homolog 2 (1388 aa).

Residues 31 to 210 (ALEKAIKQNT…DSYWKKIHEL (180 aa)) form the Helicase ATP-binding domain. 44 to 51 (LETGSGKT) is a binding site for ATP. The DECH box signature appears at 152–155 (DECH). Residues 380–544 (LGYSSLENIR…PLPDDSDEPL (165 aa)) form the Helicase C-terminal domain. The 87-residue stretch at 559-645 (SVSLIYHYCS…VPDMVVAETV (87 aa)) folds into the Dicer dsRNA-binding fold domain. The PAZ domain maps to 805–935 (TSHEVLEKHE…LPPELCHVIL (131 aa)). 2 consecutive RNase III domains span residues 962-1113 (AYNL…SEGG) and 1149-1296 (VGYM…VDSG). Mg(2+) contacts are provided by Glu-1188, Asp-1282, and Glu-1285. One can recognise a DRBM domain in the interval 1315 to 1384 (TPETVKLHPV…YKEVLNLLKN (70 aa)).

Belongs to the helicase family. Dicer subfamily. It depends on Mg(2+) as a cofactor. The cofactor is Mn(2+).

Its subcellular location is the nucleus. It localises to the cytoplasm. Ribonuclease (RNase) III involved in RNA-mediated post-transcriptional gene silencing (PTGS). Involved in the processing of natural small interfering RNAs (nat-siRNAs, derived from cis-natural antisense transcripts) by cleaving small dsRNAs into 24 nucleotide nat-siRNAs. Plays an essential role in transitive silencing of transgenes by processing secondary siRNAs. This pathway, which requires DCL4 and RDR6, amplifies silencing by using the target RNA as substrate to generate secondary siRNAs, providing an efficient mechanism for long-distance silencing. May participate with DCL3 in the production of 24 nucleotide repeat-associated siRNAs (ra-siRNAs) which derive from heterochromatin and DNA repeats such as transposons. Plays a role in antiviral RNA silencing. Involved in the production of viral siRNAs derived from the turnip crinkle virus (TCV) and tobacco rattle virus (TRV). Targeted by the viral silencing suppressor (VSR) protein 2b of the cucumber mosaic virus (CMV) that inactivates DCL2 function in RNA silencing. Does not seem to be involved in microRNAs (miRNAs) processing. The protein is Endoribonuclease Dicer homolog 2 of Arabidopsis thaliana (Mouse-ear cress).